Consider the following 569-residue polypeptide: Urease subunit alpha (569 aa).

The 439-residue stretch at 131–569 folds into the Urease domain; it reads GSIDTHIHFI…VPMAQRYFLL (439 aa). His-136, His-138, and Lys-219 together coordinate Ni(2+). Residue Lys-219 is modified to N6-carboxylysine. Position 221 (His-221) interacts with substrate. His-248 and His-274 together coordinate Ni(2+). His-322 functions as the Proton donor in the catalytic mechanism. Asp-362 lines the Ni(2+) pocket.

The protein belongs to the metallo-dependent hydrolases superfamily. Urease alpha subunit family. Heterotrimer of UreA (gamma), UreB (beta) and UreC (alpha) subunits. Three heterotrimers associate to form the active enzyme. It depends on Ni cation as a cofactor. Post-translationally, carboxylation allows a single lysine to coordinate two nickel ions.

Its subcellular location is the cytoplasm. The enzyme catalyses urea + 2 H2O + H(+) = hydrogencarbonate + 2 NH4(+). Its pathway is nitrogen metabolism; urea degradation; CO(2) and NH(3) from urea (urease route): step 1/1. This is Urease subunit alpha from Prochlorococcus marinus (strain MIT 9215).